Reading from the N-terminus, the 159-residue chain is Ribosomal RNA large subunit methyltransferase H (159 aa).

Residues Leu-76 and Gly-108 each contribute to the S-adenosyl-L-methionine site.

Belongs to the RNA methyltransferase RlmH family. As to quaternary structure, homodimer.

It is found in the cytoplasm. It catalyses the reaction pseudouridine(1915) in 23S rRNA + S-adenosyl-L-methionine = N(3)-methylpseudouridine(1915) in 23S rRNA + S-adenosyl-L-homocysteine + H(+). In terms of biological role, specifically methylates the pseudouridine at position 1915 (m3Psi1915) in 23S rRNA. This Natranaerobius thermophilus (strain ATCC BAA-1301 / DSM 18059 / JW/NM-WN-LF) protein is Ribosomal RNA large subunit methyltransferase H.